Reading from the N-terminus, the 94-residue chain is Aspartyl/glutamyl-tRNA(Asn/Gln) amidotransferase subunit C (94 aa).

It belongs to the GatC family. As to quaternary structure, heterotrimer of A, B and C subunits.

The enzyme catalyses L-glutamyl-tRNA(Gln) + L-glutamine + ATP + H2O = L-glutaminyl-tRNA(Gln) + L-glutamate + ADP + phosphate + H(+). The catalysed reaction is L-aspartyl-tRNA(Asn) + L-glutamine + ATP + H2O = L-asparaginyl-tRNA(Asn) + L-glutamate + ADP + phosphate + 2 H(+). Functionally, allows the formation of correctly charged Asn-tRNA(Asn) or Gln-tRNA(Gln) through the transamidation of misacylated Asp-tRNA(Asn) or Glu-tRNA(Gln) in organisms which lack either or both of asparaginyl-tRNA or glutaminyl-tRNA synthetases. The reaction takes place in the presence of glutamine and ATP through an activated phospho-Asp-tRNA(Asn) or phospho-Glu-tRNA(Gln). The chain is Aspartyl/glutamyl-tRNA(Asn/Gln) amidotransferase subunit C from Caldicellulosiruptor saccharolyticus (strain ATCC 43494 / DSM 8903 / Tp8T 6331).